A 494-amino-acid polypeptide reads, in one-letter code: Acetyl-coenzyme A carboxylase carboxyl transferase subunit beta, chloroplastic (494 aa).

Residues 226–494 (LWVQCENCYG…VPLNQNETEH (269 aa)) enclose the CoA carboxyltransferase N-terminal domain. Residues C230, C233, C249, and C252 each contribute to the Zn(2+) site. Residues 230 to 252 (CENCYGLNYKKFLKSKMNICEQC) form a C4-type zinc finger.

Belongs to the AccD/PCCB family. In terms of assembly, acetyl-CoA carboxylase is a heterohexamer composed of biotin carboxyl carrier protein, biotin carboxylase and 2 subunits each of ACCase subunit alpha and ACCase plastid-coded subunit beta (accD). Zn(2+) is required as a cofactor.

It localises to the plastid. Its subcellular location is the chloroplast stroma. The enzyme catalyses N(6)-carboxybiotinyl-L-lysyl-[protein] + acetyl-CoA = N(6)-biotinyl-L-lysyl-[protein] + malonyl-CoA. The protein operates within lipid metabolism; malonyl-CoA biosynthesis; malonyl-CoA from acetyl-CoA: step 1/1. In terms of biological role, component of the acetyl coenzyme A carboxylase (ACC) complex. Biotin carboxylase (BC) catalyzes the carboxylation of biotin on its carrier protein (BCCP) and then the CO(2) group is transferred by the transcarboxylase to acetyl-CoA to form malonyl-CoA. This Coffea arabica (Arabian coffee) protein is Acetyl-coenzyme A carboxylase carboxyl transferase subunit beta, chloroplastic.